The following is a 71-amino-acid chain: Large ribosomal subunit protein bL31 (71 aa).

Residues Cys16, Cys18, Cys36, and Cys39 each contribute to the Zn(2+) site.

This sequence belongs to the bacterial ribosomal protein bL31 family. Type A subfamily. As to quaternary structure, part of the 50S ribosomal subunit. The cofactor is Zn(2+).

In terms of biological role, binds the 23S rRNA. The chain is Large ribosomal subunit protein bL31 from Pseudothermotoga lettingae (strain ATCC BAA-301 / DSM 14385 / NBRC 107922 / TMO) (Thermotoga lettingae).